The sequence spans 293 residues: ATP synthase gamma chain (293 aa).

The protein belongs to the ATPase gamma chain family. F-type ATPases have 2 components, CF(1) - the catalytic core - and CF(0) - the membrane proton channel. CF(1) has five subunits: alpha(3), beta(3), gamma(1), delta(1), epsilon(1). CF(0) has three main subunits: a, b and c.

It is found in the cell inner membrane. In terms of biological role, produces ATP from ADP in the presence of a proton gradient across the membrane. The gamma chain is believed to be important in regulating ATPase activity and the flow of protons through the CF(0) complex. This is ATP synthase gamma chain from Beijerinckia indica subsp. indica (strain ATCC 9039 / DSM 1715 / NCIMB 8712).